The following is a 257-amino-acid chain: Putative hydro-lyase BceJ2315_40370 (257 aa).

This sequence belongs to the D-glutamate cyclase family.

This chain is Putative hydro-lyase BceJ2315_40370, found in Burkholderia cenocepacia (strain ATCC BAA-245 / DSM 16553 / LMG 16656 / NCTC 13227 / J2315 / CF5610) (Burkholderia cepacia (strain J2315)).